We begin with the raw amino-acid sequence, 490 residues long: MAAAAVARAVLFSAARRRLCGFTERLLIGGAAGRSLYFGGNRLRSTQAAAQVVLNVPETRVTCLENGLRVASEDSGLATCTVGLWIDAGSRYENEKNNGTAHFLEHMAFKGTKKRSQLDLELEIENMGAHLNAYTSREQTVYYAKAFSKDLPRAVEILADIIQNSTLGEAEIERERGVILREMQEVETNLQEVVFDYLHATAYQNTALGRTILGPTENIKSINRKDLVDYITTHYKGPRIVLAAAGGVSHDELLELAKFHFGESLSTHKGEIPALPPCKFTGSEIRVRDDKMPLAHLAVAVEAVGWAHPDTICLMVANTLIGNWDRSFGGGMNLSSKLAQLTCHGNLCHSFQSFNTSYTDTGLWGIYMVCEPATVADMLHVVQKEWMRLCTSVTESEVARAKNLLKTNMLLQLDGSTPICEDIGRQMLCYNRRIPIPELEARIDAVNAEIIREVCTKYIYDKSPAVAAVGPIEQLPDFNQICSNMRWLHD.

The transit peptide at 1–46 (MAAAAVARAVLFSAARRRLCGFTERLLIGGAAGRSLYFGGNRLRST) directs the protein to the mitochondrion. A Zn(2+)-binding site is contributed by His-102. The active-site Proton acceptor is Glu-105. 2 residues coordinate Zn(2+): His-106 and Glu-182.

The protein belongs to the peptidase M16 family. In terms of assembly, heterodimer of PMPCA (alpha) and PMPCB (beta) subunits, forming the mitochondrial processing protease (MPP) in which PMPCA is involved in substrate recognition and binding and PMPCB is the catalytic subunit. Requires Zn(2+) as cofactor.

It is found in the mitochondrion matrix. It carries out the reaction Release of N-terminal transit peptides from precursor proteins imported into the mitochondrion, typically with Arg in position P2.. Its activity is regulated as follows. Binding to PMPCA is required for catalytic activity. In terms of biological role, catalytic subunit of the essential mitochondrial processing protease (MPP), which cleaves the mitochondrial sequence off newly imported precursors proteins. Preferentially, cleaves after an arginine at position P2. Required for PINK1 turnover by coupling PINK1 mitochondrial import and cleavage, which results in subsequent PINK1 proteolysis. The polypeptide is Mitochondrial-processing peptidase subunit beta (PMPCB) (Bos taurus (Bovine)).